The chain runs to 1007 residues: Serine/threonine-protein kinase PRP4 homolog (1007 aa).

Residues 1–102 (MAATEPPSLR…LSPAKRTKLD (102 aa)) are disordered. Position 2 is an N-acetylalanine (Ala-2). Phosphoserine is present on residues Ser-8, Ser-21, Ser-24, and Ser-33. Composition is skewed to basic residues over residues 40-60 (KHSRHKKKKHKHRSKHKKHKH) and 68-82 (KKHKHKHKHKKHKRK). The segment covering 83–92 (EVIEASDKEG) has biased composition (basic and acidic residues). Residues Ser-88 and Ser-94 each carry the phosphoserine modification. Lys-100 is modified (N6-acetyllysine; alternate). Lys-100 participates in a covalent cross-link: Glycyl lysine isopeptide (Lys-Gly) (interchain with G-Cter in SUMO2); alternate. Lys-112 participates in a covalent cross-link: Glycyl lysine isopeptide (Lys-Gly) (interchain with G-Cter in SUMO2). Residue Lys-118 forms a Glycyl lysine isopeptide (Lys-Gly) (interchain with G-Cter in SUMO2); alternate linkage. Residue Lys-118 forms a Glycyl lysine isopeptide (Lys-Gly) (interchain with G-Cter in SUMO1); alternate linkage. Ser-132 is subject to Phosphoserine. The residue at position 141 (Tyr-141) is a Phosphotyrosine. 2 disordered regions span residues 141-535 (YESG…EDEE) and 560-583 (NISVPSEPSSPQSSTRSRSPSPDD). Phosphoserine occurs at positions 143, 145, and 167. Residues 158–169 (GNRSSTRSSSTR) show a composition bias toward low complexity. Residues Lys-171 and Lys-178 each participate in a glycyl lysine isopeptide (Lys-Gly) (interchain with G-Cter in SUMO2) cross-link. 2 stretches are compositionally biased toward basic residues: residues 180 to 203 (SAKKRSKSRSKERTRHRSDKRKSK) and 215 to 231 (RSKSKERRKSKSPSKRS). 6 positions are modified to phosphoserine: Ser-240, Ser-242, Ser-258, Ser-278, Ser-292, and Ser-294. Positions 248 to 271 (RSQEKVGKARSPAEEKMKSEEKGK) are enriched in basic and acidic residues. Basic and acidic residues predominate over residues 294 to 303 (SPVDLRDKSK). Residues 304-315 (DRRSRSKERKSK) show a composition bias toward basic residues. Residues 316 to 325 (RSEIDKEKKP) show a composition bias toward basic and acidic residues. Ser-328, Ser-354, Ser-356, Ser-366, and Ser-368 each carry phosphoserine. Positions 342 to 367 (PSRRPGRSPKRRSLSPKLRDKSRRSR) are enriched in basic residues. Thr-385 bears the Phosphothreonine mark. Ser-387 carries the phosphoserine modification. Basic and acidic residues-rich tracts occupy residues 395 to 408 (RSLERKRREPERRR) and 415 to 429 (RPRDDILGRCERSKD). Ser-427, Ser-431, and Ser-437 each carry phosphoserine. Residues 438-497 (PTRRRSRSPIRRRSRSPLRRSRSPRRRSRSPRRRDRSRRSRSRLRRRSRSRGGHRRRSRS) are compositionally biased toward basic residues. Ser-518, Ser-519, Ser-520, Ser-565, Ser-569, Ser-576, Ser-578, and Ser-580 each carry phosphoserine. The segment covering 518–535 (SSSDDNLEDFDVEEEDEE) has biased composition (acidic residues). The span at 562–581 (SVPSEPSSPQSSTRSRSPSP) shows a compositional bias: low complexity. Glycyl lysine isopeptide (Lys-Gly) (interchain with G-Cter in SUMO2) cross-links involve residues Lys-593 and Lys-659. Residues 687–1006 (YNVYGYTGQG…ALQHAFIQEK (320 aa)) form the Protein kinase domain. ATP contacts are provided by residues 693–701 (TGQGVFSNV) and Lys-717. Position 717 is an N6-acetyllysine (Lys-717). Asp-815 serves as the catalytic Proton acceptor. Position 849 is a phosphotyrosine (Tyr-849). The residue at position 852 (Ser-852) is a Phosphoserine.

Belongs to the protein kinase superfamily. CMGC Ser/Thr protein kinase family. Interacts with CLK1 C-terminus. Associates with the U5 snRNP and NCOR1 deacetylase complexes. Identified in the spliceosome C complex. Phosphorylated by CLK1. Autophosphorylated; phosphorylation inhibits interaction with its targets, such as PRPF6 or SMARCA4.

It is found in the nucleus. The protein resides in the chromosome. It localises to the centromere. The protein localises to the kinetochore. The catalysed reaction is L-seryl-[protein] + ATP = O-phospho-L-seryl-[protein] + ADP + H(+). It carries out the reaction L-threonyl-[protein] + ATP = O-phospho-L-threonyl-[protein] + ADP + H(+). Functionally, serine/threonine kinase involved in spliceosomal assembly as well as mitosis and signaling regulation. Connects chromatin mediated regulation of transcription and pre-mRNA splicing. During spliceosomal assembly, interacts with and phosphorylates PRPF6 and PRPF31, components of the U4/U6-U5 tri-small nuclear ribonucleoprotein (snRNP), to facilitate the formation of the spliceosome B complex. Plays a role in regulating transcription and the spindle assembly checkpoint (SAC). Associates with U5 snRNP and NCOR1 deacetylase complexes which may allow a coordination of pre-mRNA splicing with chromatin remodeling events involved in transcriptional regulation. Associates and probably phosphorylates SMARCA4 and NCOR1. Phosphorylates SRSF1. Associates with kinetochores during mitosis and is necessary for recruitment and maintenance of the checkpoint proteins such as MAD1L1 and MAD12L1 at the kinetochores. Phosphorylates and regulates the activity of the transcription factors such as ELK1 and KLF13. Phosphorylates nuclear YAP1 and WWTR1/TAZ which induces nuclear exclusion and regulates Hippo signaling pathway, involved in tissue growth control. In Mus musculus (Mouse), this protein is Serine/threonine-protein kinase PRP4 homolog (Prp4k).